The chain runs to 927 residues: Heat shock protein hsp98 (927 aa).

The Clp R domain occupies 2–162; the sequence is TSKMEFTDRA…TDAIQAIRGT (161 aa). 2 repeat regions span residues 7-87 and 99-162; these read FTDR…LVRL and MAPS…IRGT. Residues 179 to 428 are NBD1; that stretch reads LAKFTIDMTA…AVRVARESQP (250 aa). 224–231 serves as a coordination point for ATP; sequence GEPGVGKT. Positions 429-553 form a coiled coil; sequence EIIDSLERKL…AALNAAAAET (125 aa). Residues 454-473 form a disordered region; sequence EASKARLEQAKKDAENVEEE. The NBD2 stretch occupies residues 562 to 752; it reads VGPDQINEIV…IVVMTSNLGA (191 aa). 635–642 is an ATP binding site; the sequence is GPSGTGKT. Residues 908-927 are disordered; the sequence is EDAVDEVAPESEMDEDLYDD.

Belongs to the ClpA/ClpB family. In terms of assembly, homohexamer, forming a ring with a central pore.

The protein resides in the cytoplasm. It is found in the nucleus. Its function is as follows. Required, in concert with Hsp40 and Hsp70 and small Hsps, for the dissociation, resolubilization and refolding of aggregates of damaged proteins after heat or other environmental stresses. Extracts proteins from aggregates by unfolding and threading them in an ATP-dependent process through the axial channel of the protein hexamer, after which they can be refolded by components of the Hsp70/Hsp40 chaperone system. The polypeptide is Heat shock protein hsp98 (hsp98) (Neurospora crassa (strain ATCC 24698 / 74-OR23-1A / CBS 708.71 / DSM 1257 / FGSC 987)).